The primary structure comprises 685 residues: DNA-directed RNA polymerase subunit beta' (685 aa).

4 residues coordinate Zn(2+): cysteine 69, cysteine 71, cysteine 87, and cysteine 90. Mg(2+)-binding residues include aspartate 489, aspartate 491, and aspartate 493.

Belongs to the RNA polymerase beta' chain family. RpoC1 subfamily. In terms of assembly, in plastids the minimal PEP RNA polymerase catalytic core is composed of four subunits: alpha, beta, beta', and beta''. When a (nuclear-encoded) sigma factor is associated with the core the holoenzyme is formed, which can initiate transcription. Mg(2+) serves as cofactor. Requires Zn(2+) as cofactor.

The protein resides in the plastid. It localises to the chloroplast. The enzyme catalyses RNA(n) + a ribonucleoside 5'-triphosphate = RNA(n+1) + diphosphate. Its function is as follows. DNA-dependent RNA polymerase catalyzes the transcription of DNA into RNA using the four ribonucleoside triphosphates as substrates. The polypeptide is DNA-directed RNA polymerase subunit beta' (Buxus microphylla (Littleleaf boxwood)).